The sequence spans 163 residues: Crossover junction endodeoxyribonuclease RuvC (163 aa).

Active-site residues include Asp7, Glu66, and Asp139. 3 residues coordinate Mg(2+): Asp7, Glu66, and Asp139.

It belongs to the RuvC family. In terms of assembly, homodimer which binds Holliday junction (HJ) DNA. The HJ becomes 2-fold symmetrical on binding to RuvC with unstacked arms; it has a different conformation from HJ DNA in complex with RuvA. In the full resolvosome a probable DNA-RuvA(4)-RuvB(12)-RuvC(2) complex forms which resolves the HJ. It depends on Mg(2+) as a cofactor.

It is found in the cytoplasm. It catalyses the reaction Endonucleolytic cleavage at a junction such as a reciprocal single-stranded crossover between two homologous DNA duplexes (Holliday junction).. Functionally, the RuvA-RuvB-RuvC complex processes Holliday junction (HJ) DNA during genetic recombination and DNA repair. Endonuclease that resolves HJ intermediates. Cleaves cruciform DNA by making single-stranded nicks across the HJ at symmetrical positions within the homologous arms, yielding a 5'-phosphate and a 3'-hydroxyl group; requires a central core of homology in the junction. The consensus cleavage sequence is 5'-(A/T)TT(C/G)-3'. Cleavage occurs on the 3'-side of the TT dinucleotide at the point of strand exchange. HJ branch migration catalyzed by RuvA-RuvB allows RuvC to scan DNA until it finds its consensus sequence, where it cleaves and resolves the cruciform DNA. This is Crossover junction endodeoxyribonuclease RuvC from Thermomicrobium roseum (strain ATCC 27502 / DSM 5159 / P-2).